The primary structure comprises 284 residues: D-tagatose-1,6-bisphosphate aldolase subunit GatY (284 aa).

Residue D82 is the Proton donor of the active site. Zn(2+) is bound by residues H83 and H180. G181 lines the dihydroxyacetone phosphate pocket. Position 208 (H208) interacts with Zn(2+). Dihydroxyacetone phosphate contacts are provided by residues 209 to 211 (GAS) and 230 to 233 (NVAT).

Belongs to the class II fructose-bisphosphate aldolase family. TagBP aldolase GatY subfamily. Forms a complex with GatZ. Zn(2+) is required as a cofactor.

It carries out the reaction D-tagatofuranose 1,6-bisphosphate = D-glyceraldehyde 3-phosphate + dihydroxyacetone phosphate. The protein operates within carbohydrate metabolism; D-tagatose 6-phosphate degradation; D-glyceraldehyde 3-phosphate and glycerone phosphate from D-tagatose 6-phosphate: step 2/2. Functionally, catalytic subunit of the tagatose-1,6-bisphosphate aldolase GatYZ, which catalyzes the reversible aldol condensation of dihydroxyacetone phosphate (DHAP or glycerone-phosphate) with glyceraldehyde 3-phosphate (G3P) to produce tagatose 1,6-bisphosphate (TBP). Requires GatZ subunit for full activity and stability. Is involved in the catabolism of galactitol. The protein is D-tagatose-1,6-bisphosphate aldolase subunit GatY of Escherichia coli O157:H7.